The sequence spans 117 residues: MALKDTAKKMRDLLESIQRDLDKAERGNKAAAQRVRTDSIKLEKVAKVYRKESIKAEKSGLMTRKPATKAKKAAATKKAAPKPKIQAKAAPKAKATTKKTPAKAKAKKSSKSRYLRK.

The segment at 57 to 117 is disordered; sequence EKSGLMTRKP…KSSKSRYLRK (61 aa). Positions 66-81 are enriched in basic residues; sequence PATKAKKAAATKKAAP. Residues 82–94 show a composition bias toward low complexity; it reads KPKIQAKAAPKAK. A compositionally biased stretch (basic residues) spans 95-117; sequence ATTKKTPAKAKAKKSSKSRYLRK.

This sequence belongs to the histone H1/H5 family. HCT subfamily.

Might have a role analogous to that of eukaryotic histone proteins. The sequence is that of Histone H1-like protein HC1 (hctA) from Chlamydia psittaci (Chlamydophila psittaci).